The chain runs to 546 residues: MALRVPKASGPQLFREGYRIMQGVEDAVIRNCNAIRELSEITRTSLGPNGKNKIVVNHLQQTFLTNDAATIIRELEVIHPAAKLVVDATQQQENELGDAANFVVVFTGELLAKAENMIRMGLTPLEIAKGYEMALSHTMEVLEEICADKIETVESEKELIKAIRTCISSKQYGNEDFLSDLVAKAILTVLPKDPSKFNVDNIRVVKIMGSSLYNSQVVKGMVFPREPEGTVTRSKEAKVAVFSCPLDISQTETKGTVLLHNAQEMLDFSKGEENLIESHIKEIYDAGVRVVVTSGNVNDLVLHYLNRFEILVIRVPSKFELRRLCRVVGATPLARMGVPMPEEMGSVDVVETIEIGGDRVTVFRQVEDITRTATIVLRGATKTYLDDLERAIDDGVNIVKALVKDNRLIFGAGASDMQLCIRLISVGEKTPGIYQHAIKQYGEAFEVVPRTISENAGLDPTDVISKLYAAHHKENGESIGVDVECENDGTLDAKEAGIFDVLLAKKSAIRLATETVLTVLNVDQVVMSKPAGGPKPPGPNPHWDDD.

Positions 527-546 are disordered; sequence MSKPAGGPKPPGPNPHWDDD.

It belongs to the TCP-1 chaperonin family. In terms of assembly, heterooligomeric complex of about 850 to 900 kDa that forms two stacked rings, 12 to 16 nm in diameter.

Its subcellular location is the cytoplasm. Its function is as follows. Molecular chaperone; assists the folding of proteins upon ATP hydrolysis. Known to play a role, in vitro, in the folding of actin and tubulin. The polypeptide is Probable T-complex protein 1 subunit theta (cct8) (Schizosaccharomyces pombe (strain 972 / ATCC 24843) (Fission yeast)).